The sequence spans 1551 residues: Serine/threonine-protein kinase MRCK gamma (1551 aa).

The 267-residue stretch at 71–337 (FEILKVIGRG…LDDFRKHPFF (267 aa)) folds into the Protein kinase domain. ATP contacts are provided by residues 77–85 (IGRGAFGEV) and K100. D195 serves as the catalytic Proton acceptor. S216 and S228 each carry phosphoserine; by autocatalysis. T234 is modified (phosphothreonine; by autocatalysis). Residues 338-408 (EGVDWERLAT…TSGSPFDVQS (71 aa)) form the AGC-kinase C-terminal domain. Coiled-coil stretches lie at residues 442–675 (QPQE…TESN) and 729–801 (KARR…QARG). The disordered stretch occupies residues 578-605 (QESSQAKTVHAAPETNGIGSPEGQSQEA). The tract at residues 820–886 (TEKDSAKDPG…SHTLRPRSFP (67 aa)) is disordered. Basic and acidic residues predominate over residues 839–849 (AEAELRPEGRR). Residues 877–926 (SHTLRPRSFPSPTKCLRCTSLMLGLGRQGLGCDTCGYFCHSACASQAPPC) form a Phorbol-ester/DAG-type zinc finger. Positions 946–1065 (GTAYEGFLSV…WLQVLGELQR (120 aa)) constitute a PH domain. One can recognise a CNH domain in the interval 1091 to 1365 (LPHALCAAVI…RPLNPEGSLF (275 aa)). The 14-residue stretch at 1436-1449 (ISPPTNFNHLVHVG) folds into the CRIB domain. The interval 1441 to 1551 (NFNHLVHVGP…PPDPESESSP (111 aa)) is disordered. The span at 1455–1468 (PNTRDGTRAQEQKS) shows a compositional bias: basic and acidic residues. A Phosphoserine modification is found at S1481. A compositionally biased stretch (polar residues) spans 1511-1527 (TSLSSESVSCPQGSLSP).

It belongs to the protein kinase superfamily. AGC Ser/Thr protein kinase family. DMPK subfamily. As to quaternary structure, homodimer and homotetramer via the coiled coil regions. Interacts tightly with GTP-bound but not GDP-bound CDC42. It depends on Mg(2+) as a cofactor.

It is found in the cytoplasm. It catalyses the reaction L-seryl-[protein] + ATP = O-phospho-L-seryl-[protein] + ADP + H(+). The catalysed reaction is L-threonyl-[protein] + ATP = O-phospho-L-threonyl-[protein] + ADP + H(+). With respect to regulation, maintained in an inactive, closed conformation by an interaction between the kinase domain and the negative autoregulatory C-terminal coiled-coil region. Agonist binding to the phorbol ester binding site disrupts this, releasing the kinase domain to allow N-terminus-mediated dimerization and kinase activation by transautophosphorylation. In terms of biological role, may act as a downstream effector of CDC42 in cytoskeletal reorganization. Contributes to the actomyosin contractility required for cell invasion, through the regulation of MYPT1 and thus MLC2 phosphorylation. The polypeptide is Serine/threonine-protein kinase MRCK gamma (Mus musculus (Mouse)).